The following is a 1441-amino-acid chain: Envelopment polyprotein (1441 aa).

The first 13 residues, 1 to 13 (MIRMLVLIVVTAA), serve as a signal peptide directing secretion. The Lumenal portion of the chain corresponds to 14–200 (SPVYQRCFQD…GSIANSICQN (187 aa)). N-linked (GlcNAc...) asparagine; by host glycosylation is present at Asn-57. The chain crosses the membrane as a helical span at residues 201-221 (IEIIILVTLTLLIFILLSILS). At 222–305 (KTYICYLLMP…RAARVMCKSK (84 aa)) the chain is on the cytoplasmic side. Residues 306–326 (GPASILSIITAVLVLTFVTPI) form a helical membrane-spanning segment. The Lumenal portion of the chain corresponds to 327 to 365 (NSMVLGESKETFELEELPDDMLEMALRINSYYFTCILNY). A helical membrane pass occupies residues 366-386 (AVSWGLIIAGLLVGLIFKKYQ). Topologically, residues 387-452 (HRFLNIYAMY…LVQYKAKWMM (66 aa)) are cytoplasmic. A helical membrane pass occupies residues 453 to 473 (NFLIIYIFLILIKDSAIVGQA). At 474-1395 (TGTDFTTCLE…EPFKNLFGSY (922 aa)) the chain is on the lumenal side. N-linked (GlcNAc...) asparagine; by host glycans are attached at residues Asn-490 and Asn-1177. The chain crosses the membrane as a helical span at residues 1396–1416 (IGIFYTFIISIIALLVIIYVL). The Cytoplasmic segment spans residues 1417–1441 (LPICFKLRDTLRKHDDAYKREMKIR).

Belongs to the orthobunyavirus envelope glycoprotein family. Glycoprotein C and Glycoprotein N interact with each other. Specific enzymatic cleavages in vivo yield mature proteins including nonstructural protein NSm, glycoprotein C, and glycoprotein N.

The protein localises to the virion membrane. Its subcellular location is the host Golgi apparatus membrane. It localises to the host endoplasmic reticulum membrane. Functionally, glycoprotein C and Glycoprotein N interact with each other and are present at the surface of the virion. They are able to attach the virion to a cell receptor and to promote fusion of membranes after endocytosis of the virion. This Bunyavirus La Crosse protein is Envelopment polyprotein (GP).